Here is a 444-residue protein sequence, read N- to C-terminus: Putative methylesterase 13, chloroplastic (444 aa).

Disordered regions lie at residues 1-32 (MGNS…KYKY), 49-90 (PSLS…KDSH), and 124-176 (SVVY…QLVD). The N-terminal 60 residues, 1–60 (MGNSFTCISHEQEQRPKKSSGGGGNNSGKYKYVRRLSLMPSFRRRTLLPSLSCSGSSSTS), are a transit peptide targeting the chloroplast. Positions 49–64 (PSLSCSGSSSTSSSKK) are enriched in low complexity. The segment covering 65–82 (GGIKAKTKKIRERHHHHH) has biased composition (basic residues). The span at 124–148 (SVVYPSAQPSGTSSGPVSAVQTPKK) shows a compositional bias: polar residues. Positions 149 to 164 (SSAGFVRSSSSRQRSS) are enriched in low complexity. The 121-residue stretch at 190 to 310 (FVLVHGGGFG…LFNQQLGSND (121 aa)) folds into the AB hydrolase-1 domain. The active-site Acyl-ester intermediate is the aspartate 264. Residues aspartate 390 and histidine 418 each act as charge relay system in the active site.

The protein belongs to the AB hydrolase superfamily. Methylesterase family.

It is found in the plastid. The protein localises to the chloroplast. Putative methylesterase. The protein is Putative methylesterase 13, chloroplastic of Arabidopsis thaliana (Mouse-ear cress).